Reading from the N-terminus, the 629-residue chain is Embryonic polyadenylate-binding protein (629 aa).

4 consecutive RRM domains span residues 11–89 (ASLY…WSQR), 99–175 (GNVF…HFKS), 191–268 (TNVY…RAQK), and 294–370 (VNLY…LAQR). In terms of domain architecture, PABC spans 539-616 (QEPLTASSLA…AVAVLQAHQA (78 aa)).

This sequence belongs to the polyadenylate-binding protein type-1 family. In terms of assembly, interacts with dazl in an RNA-independent manner. The C-terminus can self-associate and also interact with the C-terminus of pabpc1, independently of RNA. RRM 1 and RRM 2 interact with both eif4g1 and paip1, and the C-terminus also interacts with paip1. Prior to oocyte maturation, found in a complex with dazl and pum2 proteins and spdy1 mRNA; pum2 dissociates from the complex during maturation. Interacts with the translation termination factor sup35/erf3.

It localises to the cytoplasm. In terms of biological role, binds and protects the poly(A) tail of mRNA with or without an AU-rich element (ARE) and prevents mRNA deadenylation. Stimulates the translation of mRNAs to which it is bound during early development. This Xenopus tropicalis (Western clawed frog) protein is Embryonic polyadenylate-binding protein.